The primary structure comprises 736 residues: Sulfate transporter (736 aa).

The interval 1–28 is disordered; sequence MSSESKEPHVLSPKDSFEGNDRYSPPSR. Residues serine 12 and serine 16 each carry the phosphoserine modification. Helical transmembrane passes span 114–134 and 139–159; these read VMSGLIVGILLVPQSIAYSLL and PIYGLYTSFFASLIYFLLGTS. N-linked (GlcNAc...) asparagine glycosylation is found at asparagine 201 and asparagine 207. The next 6 helical transmembrane spans lie at 229-249, 257-277, 380-400, 422-442, 457-477, and 526-546; these read FLAGIYQVAMGFFQVGFVSVY, GFVTGASFTILTSQAKYLLGL, LIPSVAVDAIAISIIGFAITV, AIGFCNIIPSFFHCFTTSAAL, LSGVMTALVLLLVLLVIAPLF, and LISTELGLLIGVCFSMFCVIL. One can recognise an STAS domain in the interval 570–721; sequence AYKNLQARPG…YSVYEAMAFA (152 aa).

Belongs to the SLC26A/SulP transporter (TC 2.A.53) family. In terms of processing, N-glycosylated.

It localises to the cell membrane. Its subcellular location is the apical cell membrane. It carries out the reaction oxalate(in) + sulfate(out) = oxalate(out) + sulfate(in). It catalyses the reaction sulfate(out) + 2 chloride(in) = sulfate(in) + 2 chloride(out). The enzyme catalyses oxalate(out) + 2 chloride(in) = oxalate(in) + 2 chloride(out). The catalysed reaction is bromide(in) + chloride(out) = bromide(out) + chloride(in). It carries out the reaction nitrate(in) + chloride(out) = nitrate(out) + chloride(in). It catalyses the reaction iodide(in) + chloride(out) = iodide(out) + chloride(in). Sulfate transporter which mediates sulfate uptake into chondrocytes in order to maintain adequate sulfation of proteoglycans which is needed for cartilage development. Mediates electroneutral anion exchange of sulfate ions for oxalate ions, sulfate and oxalate ions for chloride and/or hydroxyl ions and chloride ions for bromide, iodide and nitrate ions. The coupling of sulfate transport to both hydroxyl and chloride ions likely serves to ensure transport at both acidic pH when most sulfate uptake is mediated by sulfate-hydroxide exchange and alkaline pH when most sulfate uptake is mediated by sulfate-chloride exchange. Essential for chondrocyte proliferation, differentiation and cell size expansion. This Equus caballus (Horse) protein is Sulfate transporter (SLC26A2).